The chain runs to 338 residues: tRNA N6-adenosine threonylcarbamoyltransferase (338 aa).

Fe cation-binding residues include H111 and H115. Substrate contacts are provided by residues 134-138 (LVSGG), D167, G180, and N272. D300 contacts Fe cation.

This sequence belongs to the KAE1 / TsaD family. Fe(2+) serves as cofactor.

The protein resides in the cytoplasm. It carries out the reaction L-threonylcarbamoyladenylate + adenosine(37) in tRNA = N(6)-L-threonylcarbamoyladenosine(37) in tRNA + AMP + H(+). In terms of biological role, required for the formation of a threonylcarbamoyl group on adenosine at position 37 (t(6)A37) in tRNAs that read codons beginning with adenine. Is involved in the transfer of the threonylcarbamoyl moiety of threonylcarbamoyl-AMP (TC-AMP) to the N6 group of A37, together with TsaE and TsaB. TsaD likely plays a direct catalytic role in this reaction. This is tRNA N6-adenosine threonylcarbamoyltransferase from Shewanella oneidensis (strain ATCC 700550 / JCM 31522 / CIP 106686 / LMG 19005 / NCIMB 14063 / MR-1).